A 1645-amino-acid chain; its full sequence is Histone-lysine N-methyltransferase set-26 (1645 aa).

Disordered stretches follow at residues 1 to 82, 109 to 132, 200 to 228, 417 to 606, and 651 to 789; these read MADG…QQIP, EPAA…RPTE, DAVG…SVAP, TPEQ…VLRP, and TGQS…DEAA. 2 stretches are compositionally biased toward low complexity: residues 16-31 and 67-82; these read EQPP…AEPI and QEFY…QQIP. Residues 207–228 are compositionally biased toward polar residues; that stretch reads PGTQYRRNQQTGGGLPSTSVAP. 2 stretches are compositionally biased toward low complexity: residues 429–443 and 453–467; these read RQRA…AAQR and RPGA…PSMA. The span at 559–578 shows a compositional bias: basic and acidic residues; it reads MTQEEKNAHFARLTTDKEKP. Over residues 592–603 the composition is skewed to pro residues; that stretch reads PHVPPPPPPPLV. Polar residues predominate over residues 651–675; the sequence is TGQSGSSAAARQRTVSGSAARAQTY. Composition is skewed to basic residues over residues 684–699 and 731–741; these read QHHH…RHSS and HRPRGRPKGTR. Positions 780-789 are enriched in acidic residues; it reads SESEGIDEAA. The PHD-type zinc-finger motif lies at 794–842; that stretch reads TMRCHCGMDHGDGDTIECEGCKTWQHMACMGLTLKSNTSKYKCEMCLPR. Residues 865–904 form a disordered region; sequence AAKKQKRKSEPVEQKQKSQPSTSRKSAPMALQQQPAEPRV. Residues 881 to 899 are compositionally biased toward polar residues; sequence KSQPSTSRKSAPMALQQQP. An SET domain is found at 973 to 1064; sequence MSNEVKRQPG…RNTEVTLPFD (92 aa). The span at 1099–1172 shows a compositional bias: basic and acidic residues; sequence RHRAMDHKKR…EAKERKKMEV (74 aa). Disordered regions lie at residues 1099–1333, 1371–1536, and 1548–1645; these read RHRA…SKNV, SGLL…STEG, and PLDD…TRWN. A coiled-coil region spans residues 1103–1217; that stretch reads MDHKKREAEE…GKRKEARRRS (115 aa). Residues 1173 to 1183 show a composition bias toward low complexity; the sequence is EASAAAAPESS. Basic and acidic residues predominate over residues 1188–1210; that stretch reads AREERRIQQAEEMFRRQEEEGKR. Composition is skewed to polar residues over residues 1258-1268 and 1300-1311; these read TTQPSTSSFAT and TVATPKDTTASN. Basic and acidic residues-rich tracts occupy residues 1382–1427, 1434–1450, and 1468–1485; these read SEVR…KKAN, KSEK…EKKP, and KKTE…ESSS. A compositionally biased stretch (polar residues) spans 1554 to 1565; the sequence is SSSNTAPTTTIA.

It belongs to the class V-like SAM-binding methyltransferase superfamily. In terms of tissue distribution, expressed both in the germline and in somatic tissues.

It localises to the nucleus. The catalysed reaction is L-lysyl(9)-[histone H3] + 3 S-adenosyl-L-methionine = N(6),N(6),N(6)-trimethyl-L-lysyl(9)-[histone H3] + 3 S-adenosyl-L-homocysteine + 3 H(+). Its function is as follows. Histone methyltransferase that mediates trimethylation of 'Lys-9' of histone H3 in vitro. Involved in transcriptional regulation. Plays a role in the negative regulation of lifespan and in heat resistance. Together with set-9, negatively regulates lifespan in a germline-independent, partially daf-16-dependent fashion. Together with set-9, plays a role in germline development and maintenance and might play a role in the restriction of the trimethylation mark on histone H3 'Lys-4'(H3K4me3) to target genes specifically in the germline. Together with spr-5, required for transgenerational fertility. In Caenorhabditis elegans, this protein is Histone-lysine N-methyltransferase set-26.